A 223-amino-acid polypeptide reads, in one-letter code: N-(5'-phosphoribosyl)anthranilate isomerase (223 aa).

Belongs to the TrpF family.

It carries out the reaction N-(5-phospho-beta-D-ribosyl)anthranilate = 1-(2-carboxyphenylamino)-1-deoxy-D-ribulose 5-phosphate. Its pathway is amino-acid biosynthesis; L-tryptophan biosynthesis; L-tryptophan from chorismate: step 3/5. The protein is N-(5'-phosphoribosyl)anthranilate isomerase of Bradyrhizobium diazoefficiens (strain JCM 10833 / BCRC 13528 / IAM 13628 / NBRC 14792 / USDA 110).